Reading from the N-terminus, the 228-residue chain is Eukaryotic translation initiation factor 4E-1 (228 aa).

Residues 1 to 19 (MATAEMEKTTTFDEAEKVK) show a composition bias toward basic and acidic residues. The tract at residues 1–33 (MATAEMEKTTTFDEAEKVKLNANEADDEVEEGE) is disordered. Over residues 24–33 (EADDEVEEGE) the composition is skewed to acidic residues. EIF4G-binding regions lie at residues 53–56 (HPLE) and 63–99 (FDNPVAKSKQAAWGSSLRNVYTFSTVEDFWGAYNNIH). Residues 71-76 (KQAAWG), lysine 103, and 121-122 (WE) each bind mRNA. A disulfide bridge connects residues cysteine 126 and cysteine 164. The interval 147-156 (YTLLAMIGHQ) is EIF4G-binding. MRNA contacts are provided by residues 171 to 176 (RGKGEK) and 216 to 220 (KRLDR).

It belongs to the eukaryotic initiation factor 4E family. EIF4F is a multi-subunit complex, the composition of which varies with external and internal environmental conditions. It is composed of at least EIF4A, EIF4E and EIF4G. EIF4E is also known to interact with other partners. In higher plants two isoforms of EIF4F have been identified, named isoform EIF4F and isoform EIF(iso)4F. Isoform EIF4F has subunits p220 and p26, whereas isoform EIF(iso)4F has subunits p82 and p28. In terms of assembly, (Microbial infection) Interacts with potyvirus viral genome-linked protein (VPg); this interaction is possible in susceptible hosts but is impaired in resistant plants. Thus the VPg of tobacco etch virus (TEV) strain HAT interacts with susceptible alleles pvr2(+), pvr2(3) and pvr2(9) but not with the resistant allele pvr2(2), the VPg of TEV strain CAA10 interacts with susceptible alleles pvr2(+), pvr2(2), pvr2(3) and pvr2(9), the VPg of potato virus Y (PVY) strain LYE84 interacts with tomato eIF4E1 and eIF4E2 as well as with the Capsicum annuum eIF4E1 susceptible allele pvr2(+) but not with resistant alleles pvr2(1), pvr2(2), pvr2(3), pvr2(4), pvr2(5), pvr2(6), pvr2(7), pvr2(8) and pvr2(9) and the VPg of PVY strain SON41 interacts with C.annuum eIF4E1 susceptible alleles pvr2(+), pvr2(1), pvr2(2), pvr2(3) and pvr2(4) but not with resistant alleles pvr2(5), pvr2(6), pvr2(7), pvr2(8) and pvr2(9). In addition, the susceptible allele pvr1(+) interacts strongly with TEV strains HAT and NW VPg while resistance alleles (pvr1, pvr1(1), and pvr1(2)) fail to bind TEV VPg. According to the redox status, the Cys-126-Cys-164 disulfide bridge may have a role in regulating protein function by affecting its ability to bind capped mRNA.

Its subcellular location is the nucleus. The protein localises to the cytoplasm. In terms of biological role, component of the protein complex eIF4F, which is involved in the recognition of the mRNA cap, ATP-dependent unwinding of 5'-terminal secondary structure and recruitment of mRNA to the ribosome. Recognizes and binds the 7-methylguanosine-containing mRNA cap during an early step in the initiation of protein synthesis and facilitates ribosome binding by inducing the unwinding of the mRNAs secondary structures. Key component of recessive resistance to potyviruses. (Microbial infection) Susceptibility host factor required for viral infection (e.g. potato virus Y (PVY) and tobacco etch virus (TEV)) by recruiting viral RNAs to the host ribosomal complex via an interaction with viral genome-linked protein (VPg). This Capsicum annuum (Capsicum pepper) protein is Eukaryotic translation initiation factor 4E-1.